We begin with the raw amino-acid sequence, 185 residues long: Large ribosomal subunit protein uL22 (185 aa).

The tract at residues V157–D185 is disordered. Positions K169 to R178 are enriched in basic residues.

This sequence belongs to the universal ribosomal protein uL22 family.

The chain is Large ribosomal subunit protein uL22 (RpL17) from Ixodes scapularis (Black-legged tick).